A 341-amino-acid polypeptide reads, in one-letter code: Ribosomal RNA small subunit methyltransferase H (341 aa).

Residues 47-49, D64, F91, D109, and Q116 each bind S-adenosyl-L-methionine; that span reads GGY.

This sequence belongs to the methyltransferase superfamily. RsmH family.

The protein resides in the cytoplasm. It carries out the reaction cytidine(1402) in 16S rRNA + S-adenosyl-L-methionine = N(4)-methylcytidine(1402) in 16S rRNA + S-adenosyl-L-homocysteine + H(+). Its function is as follows. Specifically methylates the N4 position of cytidine in position 1402 (C1402) of 16S rRNA. The protein is Ribosomal RNA small subunit methyltransferase H of Rhizobium leguminosarum bv. trifolii (strain WSM1325).